A 623-amino-acid polypeptide reads, in one-letter code: Membrane protein insertase YidC (623 aa).

5 consecutive transmembrane segments (helical) span residues 8-28 (LILATGLSFLVIMVWFFLFPP), 379-399 (MGLAIIALTFLLKALVLPLAY), 449-469 (LPILIQIPIFFSLYKVIFVTI), 507-527 (TTMALIFIGALPILLGVSMWL), and 543-563 (IFAWMPWVFMFMLGHFASGLV). A compositionally biased stretch (low complexity) spans 601–617 (KPAAQPAGKAANDGAAP). The segment at 601–623 (KPAAQPAGKAANDGAAPAKKRKP) is disordered.

The protein belongs to the OXA1/ALB3/YidC family. Type 1 subfamily. Interacts with the Sec translocase complex via SecD. Specifically interacts with transmembrane segments of nascent integral membrane proteins during membrane integration.

The protein localises to the cell inner membrane. In terms of biological role, required for the insertion and/or proper folding and/or complex formation of integral membrane proteins into the membrane. Involved in integration of membrane proteins that insert both dependently and independently of the Sec translocase complex, as well as at least some lipoproteins. Aids folding of multispanning membrane proteins. This chain is Membrane protein insertase YidC, found in Cereibacter sphaeroides (strain ATCC 17029 / ATH 2.4.9) (Rhodobacter sphaeroides).